The following is a 475-amino-acid chain: MKITLPEFGKARVLVVGDVMLDRYWHGPTGRISPEAPVPVVKVEHIEERPGGAANVALNSAALGAHAVLLGLTGQDEAADALAGQMAGVKVACDFVRLADYPTITKLRVLSRNQQLLRLDFEEAFHDVDSTLLMNKVEQALPSSDVMILSDYGKGALNDVPGMIQRARAAGIPVLVDPKGTEFEKYRGATLLTPNMSEFEAVVGKVKGEEDLVAKGLALVKRFELEALLVTRSENGMTLIREGQPELHLPAQAHEVYDVTGAGDTVISTLATSLAAGMSLDEACALANTAAGIVVGKLGTSTVSPVELANALYTEQETGFGVMSEAQLKIAVQAARLRGEKVVMTNGCFDILHAGHVSYLANAGKLGDRLIVAVNTDGSVRRLKGPGRPVNSTDRRMAVLAGLGAVDWVVPFAEDTPQRLIAEVLPDLLVKGGDYKPKDIAGYDEVTANGGEVRVLNFEDGCSTSDIIKTIRERG.

Residues 1–318 (MKITLPEFGK…ANALYTEQET (318 aa)) form a ribokinase region. 195–198 (NMSE) serves as a coordination point for ATP. Residue aspartate 264 is part of the active site. Residues 344–475 (MTNGCFDILH…DIIKTIRERG (132 aa)) are cytidylyltransferase.

It in the N-terminal section; belongs to the carbohydrate kinase PfkB family. This sequence in the C-terminal section; belongs to the cytidylyltransferase family. As to quaternary structure, homodimer.

The enzyme catalyses D-glycero-beta-D-manno-heptose 7-phosphate + ATP = D-glycero-beta-D-manno-heptose 1,7-bisphosphate + ADP + H(+). The catalysed reaction is D-glycero-beta-D-manno-heptose 1-phosphate + ATP + H(+) = ADP-D-glycero-beta-D-manno-heptose + diphosphate. It participates in nucleotide-sugar biosynthesis; ADP-L-glycero-beta-D-manno-heptose biosynthesis; ADP-L-glycero-beta-D-manno-heptose from D-glycero-beta-D-manno-heptose 7-phosphate: step 1/4. It functions in the pathway nucleotide-sugar biosynthesis; ADP-L-glycero-beta-D-manno-heptose biosynthesis; ADP-L-glycero-beta-D-manno-heptose from D-glycero-beta-D-manno-heptose 7-phosphate: step 3/4. Catalyzes the phosphorylation of D-glycero-D-manno-heptose 7-phosphate at the C-1 position to selectively form D-glycero-beta-D-manno-heptose-1,7-bisphosphate. Functionally, catalyzes the ADP transfer from ATP to D-glycero-beta-D-manno-heptose 1-phosphate, yielding ADP-D-glycero-beta-D-manno-heptose. This chain is Bifunctional protein HldE, found in Aeromonas salmonicida (strain A449).